A 269-amino-acid chain; its full sequence is tRNA pseudouridine synthase A (269 aa).

D51 serves as the catalytic Nucleophile. Y109 provides a ligand contact to substrate.

This sequence belongs to the tRNA pseudouridine synthase TruA family. As to quaternary structure, homodimer.

The catalysed reaction is uridine(38/39/40) in tRNA = pseudouridine(38/39/40) in tRNA. In terms of biological role, formation of pseudouridine at positions 38, 39 and 40 in the anticodon stem and loop of transfer RNAs. The protein is tRNA pseudouridine synthase A of Aeromonas hydrophila subsp. hydrophila (strain ATCC 7966 / DSM 30187 / BCRC 13018 / CCUG 14551 / JCM 1027 / KCTC 2358 / NCIMB 9240 / NCTC 8049).